The chain runs to 101 residues: Cysteine-rich PDZ-binding protein (101 aa).

The sufficient for interaction with DLG4 stretch occupies residues 95 to 101; the sequence is NYKQTSV. Residues 98–101 form a PDZ3-binding region; sequence QTSV.

The protein belongs to the CRIPT family. Component of the minor spliceosome. Within this complex, interacts with RNF113A, as well as with SF3B1/SF3b155, SF3B2/SF3b145 and PHF5A/SF3b14b. Interacts with TUBB1. Interacts strongly with the PDZ3 domain of members of the DLG4 family. Associates with microtubules. Interacts with DLG4.

It localises to the cytoplasm. The protein resides in the synapse. Its subcellular location is the cell projection. It is found in the dendritic spine. Its function is as follows. As a component of the minor spliceosome, involved in the splicing of U12-type introns in pre-mRNAs. Involved in the cytoskeletal anchoring of DLG4 in excitatory synapses. This chain is Cysteine-rich PDZ-binding protein (CRIPT), found in Bos taurus (Bovine).